The primary structure comprises 109 residues: Nucleoid-associated protein APL_0075 (109 aa).

Residues Met1–Met21 form a disordered region. The segment covering Leu10 to Glu19 has biased composition (low complexity).

This sequence belongs to the YbaB/EbfC family. As to quaternary structure, homodimer.

It localises to the cytoplasm. Its subcellular location is the nucleoid. In terms of biological role, binds to DNA and alters its conformation. May be involved in regulation of gene expression, nucleoid organization and DNA protection. In Actinobacillus pleuropneumoniae serotype 5b (strain L20), this protein is Nucleoid-associated protein APL_0075.